Consider the following 579-residue polypeptide: Leucine-rich repeat-containing protein 15 (579 aa).

The first 21 residues, 1–21, serve as a signal peptide directing secretion; it reads MPLKHYLLLLVSCQAWAAGLA. The region spanning 22-53 is the LRRNT domain; it reads YYGCPSECTCSRASQVECTGAQIVAMPSPLPW. The Extracellular portion of the chain corresponds to 22–536; the sequence is YYGCPSECTC…TWGMTDAQSG (515 aa). 15 LRR repeats span residues 54–75, 78–99, 102–123, 126–147, 150–171, 174–195, 198–219, 222–243, 246–267, 270–291, 294–315, 318–339, 342–363, 366–387, and 390–411; these read NAMS…KFLN, ALIA…AFRN, SLRH…LFQD, NLET…QFSQ, NLKE…VFDH, GLTK…VFQH, NLQV…TFDA, NLQE…LFHN, NLQR…IFMQ, HLNK…VFGP, NLRE…AFSH, QLQV…AFNG, NLRE…VFRS, NLRN…IFAN, and GLMT…IFDH. N75 is a glycosylation site (N-linked (GlcNAc...) asparagine). Residue N369 is glycosylated (N-linked (GlcNAc...) asparagine). An LRRCT domain is found at 423–473; that stretch reads NPWRCDSNILPLHDWLILNRARLGTDTLPVCSSPASVRGQSLVIINVNFPG. The interval 476–509 is disordered; that stretch reads VQGPETPEVSSYPDTSSYPDSTSISSTTEITRST. Positions 485-506 are enriched in low complexity; it reads SSYPDTSSYPDSTSISSTTEIT. Residues 537 to 557 form a helical membrane-spanning segment; it reads LAIAAIVIGIIALACSLAACI. Residues 558 to 579 lie on the Cytoplasmic side of the membrane; that stretch reads CCCCCKKRSQAVLMQMKAPNEC.

Expressed in chodrocytes (at protein level).

The protein localises to the cell membrane. This Mus musculus (Mouse) protein is Leucine-rich repeat-containing protein 15 (Lrrc15).